Consider the following 249-residue polypeptide: Isoprenyl transferase (249 aa).

D25 is a catalytic residue. Mg(2+) is bound at residue D25. Substrate-binding positions include 26–29 (GNGR), W30, R38, H42, and 70–72 (STE). The Proton acceptor role is filled by N73. Residues W74, R76, R197, and 203–205 (RLS) contribute to the substrate site. E216 is a Mg(2+) binding site.

This sequence belongs to the UPP synthase family. In terms of assembly, homodimer. Mg(2+) serves as cofactor.

Catalyzes the condensation of isopentenyl diphosphate (IPP) with allylic pyrophosphates generating different type of terpenoids. This is Isoprenyl transferase from Streptococcus thermophilus (strain CNRZ 1066).